We begin with the raw amino-acid sequence, 403 residues long: S-adenosylmethionine synthase (403 aa).

Histidine 15 serves as a coordination point for ATP. Aspartate 17 serves as a coordination point for Mg(2+). Glutamate 43 contacts K(+). Residues glutamate 56 and glutamine 99 each contribute to the L-methionine site. The flexible loop stretch occupies residues 99-109 (QSPDINQGVDR). ATP is bound by residues 166–168 (DAK), 232–233 (KF), aspartate 241, 247–248 (RK), alanine 264, and lysine 268. Aspartate 241 lines the L-methionine pocket. Lysine 272 lines the L-methionine pocket.

The protein belongs to the AdoMet synthase family. In terms of assembly, homotetramer; dimer of dimers. Requires Mg(2+) as cofactor. K(+) is required as a cofactor.

The protein resides in the cytoplasm. The catalysed reaction is L-methionine + ATP + H2O = S-adenosyl-L-methionine + phosphate + diphosphate. Its pathway is amino-acid biosynthesis; S-adenosyl-L-methionine biosynthesis; S-adenosyl-L-methionine from L-methionine: step 1/1. In terms of biological role, catalyzes the formation of S-adenosylmethionine (AdoMet) from methionine and ATP. The overall synthetic reaction is composed of two sequential steps, AdoMet formation and the subsequent tripolyphosphate hydrolysis which occurs prior to release of AdoMet from the enzyme. The polypeptide is S-adenosylmethionine synthase (Xanthomonas campestris pv. campestris (strain ATCC 33913 / DSM 3586 / NCPPB 528 / LMG 568 / P 25)).